The chain runs to 245 residues: 2-C-methyl-D-erythritol 4-phosphate cytidylyltransferase (245 aa).

Belongs to the IspD/TarI cytidylyltransferase family. IspD subfamily.

It carries out the reaction 2-C-methyl-D-erythritol 4-phosphate + CTP + H(+) = 4-CDP-2-C-methyl-D-erythritol + diphosphate. The protein operates within isoprenoid biosynthesis; isopentenyl diphosphate biosynthesis via DXP pathway; isopentenyl diphosphate from 1-deoxy-D-xylulose 5-phosphate: step 2/6. Functionally, catalyzes the formation of 4-diphosphocytidyl-2-C-methyl-D-erythritol from CTP and 2-C-methyl-D-erythritol 4-phosphate (MEP). This Chloroherpeton thalassium (strain ATCC 35110 / GB-78) protein is 2-C-methyl-D-erythritol 4-phosphate cytidylyltransferase.